The primary structure comprises 506 residues: Glycine--tRNA ligase (506 aa).

Substrate-binding residues include Arg-99 and Glu-189. Residues 221-223 (RNE), 231-236 (FRVREL), 306-307 (EI), and 365-368 (GVDR) each bind ATP. Substrate is bound at residue 236-240 (LEQME). Residue 361 to 365 (EPSAG) coordinates substrate.

The protein belongs to the class-II aminoacyl-tRNA synthetase family. Homodimer.

The protein resides in the cytoplasm. It carries out the reaction tRNA(Gly) + glycine + ATP = glycyl-tRNA(Gly) + AMP + diphosphate. In terms of biological role, catalyzes the attachment of glycine to tRNA(Gly). This chain is Glycine--tRNA ligase, found in Deinococcus radiodurans (strain ATCC 13939 / DSM 20539 / JCM 16871 / CCUG 27074 / LMG 4051 / NBRC 15346 / NCIMB 9279 / VKM B-1422 / R1).